We begin with the raw amino-acid sequence, 206 residues long: MKILHIDSGILGEHSVSRRLTAAIVSQIKADRPDADITYRDLASERVPHLTGAQIMAPADLEGVDPDLAADVRIGRQMLEEFLAAETVVVGAPMYNFSIPSQLKAWIDRLAVAGKTFRYSEAGAEGLAKGKKVIVASTRGGHYSVAPASAMDHQETYLRSVFGFFGITDIEFIRAEGLNLGADQKQFAIAEAEKTIAEGNVFKLAS.

FMN contacts are provided by residues Ser15 to Ser17, Met94 to Phe97, and Thr138 to Gly141.

This sequence belongs to the azoreductase type 1 family. As to quaternary structure, homodimer. It depends on FMN as a cofactor.

The enzyme catalyses 2 a quinone + NADH + H(+) = 2 a 1,4-benzosemiquinone + NAD(+). It carries out the reaction N,N-dimethyl-1,4-phenylenediamine + anthranilate + 2 NAD(+) = 2-(4-dimethylaminophenyl)diazenylbenzoate + 2 NADH + 2 H(+). Functionally, quinone reductase that provides resistance to thiol-specific stress caused by electrophilic quinones. Also exhibits azoreductase activity. Catalyzes the reductive cleavage of the azo bond in aromatic azo compounds to the corresponding amines. This is FMN-dependent NADH:quinone oxidoreductase from Sinorhizobium medicae (strain WSM419) (Ensifer medicae).